Here is a 280-residue protein sequence, read N- to C-terminus: Putative transcription factor kapC (280 aa).

The disordered stretch occupies residues 1-102; it reads MQPALAPHPS…GKRPLSTSKR (102 aa). Over residues 39–49 the composition is skewed to pro residues; sequence PQPPAPQPPHM. Positions 79-89 are enriched in polar residues; it reads TQPDVTGQETP. Residues 96–159 form the bZIP domain; that stretch reads PLSTSKRAAQ…EYIINLQSRL (64 aa). A basic motif region spans residues 97 to 120; the sequence is LSTSKRAAQNRAAQRAFRQRKEAH. A leucine-zipper region spans residues 124 to 155; sequence LEGKVKAYESMGEAIKALQAENYQLREYIINL. The tract at residues 169–280 is disordered; the sequence is LPGNIDLSQP…EQTHGLPLIS (112 aa). Over residues 197–206 the composition is skewed to pro residues; sequence APPPTAPQQP.

This sequence belongs to the bZIP family.

Its subcellular location is the nucleus. Its function is as follows. Putative transcription factor. The polypeptide is Putative transcription factor kapC (kapC) (Aspergillus fumigatus (strain ATCC MYA-4609 / CBS 101355 / FGSC A1100 / Af293) (Neosartorya fumigata)).